Consider the following 814-residue polypeptide: DNA replication licensing factor Mcm6 (814 aa).

The segment at 152–179 adopts a C4-type zinc-finger fold; sequence CLDCQTEIRDVEQQFKFTNPTICRNPVC. The 207-residue stretch at 339–545 folds into the MCM domain; that stretch reads LYQNLINSLF…VVDYAIARKI (207 aa). ATP-binding residues include S392, T393, A394, K395, S396, and N497. Residues 521 to 524 carry the Arginine finger motif; sequence SRFD. R612 and E615 together coordinate ADP. Residues 656-696 form a disordered region; it reads DIHLDEEEGEENENVMDIGEETPEDTPRTNETEENDQDTPA. Residues 659 to 679 are compositionally biased toward acidic residues; it reads LDEEEGEENENVMDIGEETPE.

The protein belongs to the MCM family. In terms of assembly, component of the Mcm2-7 complex. The complex forms a toroidal hexameric ring with the proposed subunit order Mcm2-Mcm6-Mcm4-Mcm7-Mcm3-Mcm5 (By simililarity). The heterodimers of Mcm4/Mcm6 and Mcm3/Mcm5 interact with Mcm2 and Mcm7.

Its subcellular location is the nucleus. It carries out the reaction ATP + H2O = ADP + phosphate + H(+). Acts as a component of the MCM2-7 complex (MCM complex) which is the replicative helicase essential for 'once per cell cycle' DNA replication initiation and elongation in eukaryotic cells. Core component of CDC45-MCM-GINS (CMG) helicase, the molecular machine that unwinds template DNA during replication, and around which the replisome is built. The active ATPase sites in the MCM2-7 ring are formed through the interaction surfaces of two neighboring subunits such that a critical structure of a conserved arginine finger motif is provided in trans relative to the ATP-binding site of the Walker A box of the adjacent subunit. The six ATPase active sites, however, are likely to contribute differentially to the complex helicase activity. In Anopheles gambiae (African malaria mosquito), this protein is DNA replication licensing factor Mcm6.